The chain runs to 53 residues: ATP synthase protein 8 (53 aa).

Residues 5–25 traverse the membrane as a helical segment; it reads APISWLTLFFVFSITLVIFNI.

It belongs to the ATPase protein 8 family. In terms of assembly, F-type ATPases have 2 components, CF(1) - the catalytic core - and CF(0) - the membrane proton channel.

The protein localises to the mitochondrion membrane. Mitochondrial membrane ATP synthase (F(1)F(O) ATP synthase or Complex V) produces ATP from ADP in the presence of a proton gradient across the membrane which is generated by electron transport complexes of the respiratory chain. F-type ATPases consist of two structural domains, F(1) - containing the extramembraneous catalytic core and F(0) - containing the membrane proton channel, linked together by a central stalk and a peripheral stalk. During catalysis, ATP synthesis in the catalytic domain of F(1) is coupled via a rotary mechanism of the central stalk subunits to proton translocation. Part of the complex F(0) domain. Minor subunit located with subunit a in the membrane. The protein is ATP synthase protein 8 of Aedes aegypti (Yellowfever mosquito).